The primary structure comprises 276 residues: Putative glycosyltransferase 6 domain-containing protein 1 (276 aa).

Topologically, residues 1–6 (MNSKRM) are cytoplasmic. Residues 7 to 23 (LLLVLFAFSLMLVERYF) traverse the membrane as a helical; Signal-anchor for type II membrane protein segment. Residues 24–276 (RNHQVEELRL…NKYFYLNKPT (253 aa)) are Lumenal-facing. A glycan (N-linked (GlcNAc...) asparagine) is linked at Asn-74. Substrate-binding positions include 82–87 (FATGRF), 173–175 (AAN), and 195–198 (HAWW). Residue Glu-263 is the Nucleophile of the active site.

The protein belongs to the glycosyltransferase 6 family. Mn(2+) serves as cofactor. In terms of tissue distribution, expressed in both healthy and inflamed gingival tissue samples at similar levels, with higher expression in the gingival connective tissue compared to gingival epithelium. Strongest expression in testis, followed by leukocytes.

It localises to the membrane. This is Putative glycosyltransferase 6 domain-containing protein 1 (GLT6D1) from Homo sapiens (Human).